We begin with the raw amino-acid sequence, 338 residues long: Anthocyanidin reductase ((2S)-flavan-3-ol-forming) (338 aa).

NADP(+) contacts are provided by residues 18-21 (TGFV), Lys48, 87-90 (VATP), and Tyr168.

Belongs to the NAD(P)-dependent epimerase/dehydratase family. Dihydroflavonol-4-reductase subfamily.

It carries out the reaction a (2S,3R)-flavan-3-ol + 2 NADP(+) = an anthocyanidin with a 3-hydroxy group + 2 NADPH + 2 H(+). The catalysed reaction is a (2S,3S)-flavan-3-ol + 2 NADP(+) = an anthocyanidin with a 3-hydroxy group + 2 NADPH + 2 H(+). It participates in secondary metabolite biosynthesis; flavonoid biosynthesis. Functionally, produces the terminal flavan-3-ol monomers required for the formation of proanthocyanidins or condensed tannins in leaves and flowers, as well as in the skin and seeds of developing berries. Behaves as a reductase and as a C-3 epimerase. Catalyzes the double reduction of anthocyanidins, producing a mixture of (2S,3S)- and (2S,3R)-flavan-3-ols. The enzyme catalyzes sequential hydride transfers to C-2 and C-4, respectively and epimerization at C-3 is achieved by tautomerization that occurs between the two hydride transfers. Converts cyanidin, pelargonidin and delphinidin into catechin and epicatechin, afzelechin and epiafzelechin, and gallocatechin and epigallocatechin respectively. This is Anthocyanidin reductase ((2S)-flavan-3-ol-forming) from Vitis vinifera (Grape).